Consider the following 517-residue polypeptide: Ubiquitin carboxyl-terminal hydrolase 30 (517 aa).

Residues 1–35 lie on the Mitochondrial intermembrane side of the membrane; it reads MLSSRAQAARTAADKALQRFLRTGAAVRYKVMKNW. Residues 36-56 traverse the membrane as a helical segment; that stretch reads GVIGGIAAALAAGIYVIWGPI. At 57 to 517 the chain is on the cytoplasmic side; that stretch reads TERKKRRKGL…QQGREYRSEE (461 aa). Positions 68–502 constitute a USP domain; the sequence is PGLVNLGNTC…SAYLLFYERV (435 aa). C77 (nucleophile) is an active-site residue. Residues K235 and K289 each participate in a glycyl lysine isopeptide (Lys-Gly) (interchain with G-Cter in ubiquitin) cross-link. The tract at residues 364 to 395 is disordered; the sequence is SQHGPKATESPGSALGVQDTQAAPKPGLSQPA. H452 (proton acceptor) is an active-site residue.

It belongs to the peptidase C19 family. In terms of processing, ubiquitinated by parkin (PRKN) at Lys-235 and Lys-289, leading to its degradation.

It is found in the mitochondrion outer membrane. It carries out the reaction Thiol-dependent hydrolysis of ester, thioester, amide, peptide and isopeptide bonds formed by the C-terminal Gly of ubiquitin (a 76-residue protein attached to proteins as an intracellular targeting signal).. With respect to regulation, inhibited by the diterpenoid derivative 15-oxospiramilactone (S3). Deubiquitinating enzyme tethered to the mitochondrial outer membrane that acts as a key inhibitor of mitophagy by counteracting the action of parkin (PRKN): hydrolyzes ubiquitin attached by parkin on target proteins, such as RHOT1/MIRO1 and TOMM20, thereby blocking parkin's ability to drive mitophagy. Preferentially cleaves 'Lys-6'- and 'Lys-11'-linked polyubiquitin chains, 2 types of linkage that participate in mitophagic signaling. Does not cleave efficiently polyubiquitin phosphorylated at 'Ser-65'. Acts as a negative regulator of mitochondrial fusion by mediating deubiquitination of MFN1 and MFN2. The protein is Ubiquitin carboxyl-terminal hydrolase 30 (Usp30) of Rattus norvegicus (Rat).